Reading from the N-terminus, the 265-residue chain is MKIGIFDSGIGGLSVLHQAMITMPEADYIFYADVDNVPYGEKTREEVRKLVDHAVGFLVDKGCQAIVLACNTATSAAISYLREKYKLPIIGIEPAVKPAVEHTSETGRRVMVVSTPVTAKGEKLKRLIDKYDDKHVVDVVALPKLVRFAQDDDFDSSDVTDYLKCEFAPYNLNDYSELVLGCTHFNYFKDSFAKLFPDDLEMVDGNTGVSNNLKNTVMKKGIFTEKDKGKKGSVEYYYSDRKMESEAEMKHIKKLHERLERMRQI.

Substrate-binding positions include D7–S8 and Y39–G40. C70 acts as the Proton donor/acceptor in catalysis. Position 71–72 (N71–T72) interacts with substrate. Catalysis depends on C182, which acts as the Proton donor/acceptor. T183 to H184 is a substrate binding site.

It belongs to the aspartate/glutamate racemases family.

The catalysed reaction is L-glutamate = D-glutamate. It participates in cell wall biogenesis; peptidoglycan biosynthesis. Functionally, provides the (R)-glutamate required for cell wall biosynthesis. In Lachnospira eligens (strain ATCC 27750 / DSM 3376 / VPI C15-48 / C15-B4) (Eubacterium eligens), this protein is Glutamate racemase.